Here is a 237-residue protein sequence, read N- to C-terminus: Early nodulin-like protein 1 (237 aa).

The signal sequence occupies residues methionine 1–alanine 28. Positions tyrosine 29 to alanine 134 constitute a Phytocyanin domain. An N-linked (GlcNAc...) asparagine glycan is attached at asparagine 59. Cysteines 85 and 122 form a disulfide. Residues lysine 139–glycine 215 form a disordered region. 2 stretches are compositionally biased toward low complexity: residues proline 140–proline 152 and methionine 201–glycine 215. The GPI-anchor amidated serine moiety is linked to residue serine 206. Residues leucine 207 to phenylalanine 237 constitute a propeptide, removed in mature form.

Belongs to the early nodulin-like (ENODL) family. As to expression, expressed ubiquitously. Accumulates particularly in reproductive tissues, especially in maturing seeds.

The protein localises to the vacuole. The protein resides in the aleurone grain membrane. Functionally, may act as a carbohydrate transporter. The protein is Early nodulin-like protein 1 of Oryza sativa subsp. japonica (Rice).